We begin with the raw amino-acid sequence, 185 residues long: Celestoxin (185 aa).

The N-terminal stretch at 1–20 (MKFIAAVLLVALLCPKDSTS) is a signal peptide. Residues 21-148 (LASRLSGLLG…GLPVALPVSV (128 aa)) constitute a propeptide that is removed on maturation.

In terms of tissue distribution, expressed by the mandibular venom gland.

Its subcellular location is the secreted. Its function is as follows. Has a hypotensive activity. The sequence is that of Celestoxin from Caribicus warreni (Haitian giant galliwasp).